Reading from the N-terminus, the 283-residue chain is MSRPPVVARTLPALRRALAELRKRNASVALVPTMGALHDGHLSLVRLAKRRADKVVVSVFVNPTQFAPHEDFGSYPRTFKADASKLAEENVDLIWNPDVKVMYPEGFASKILTEAPAVAGLEDSFRPHFFGGVTTVVGKLFIQCRPDVAIFGSKDFQQLRVVTRMAADLDLGVKVIGAPTVRERDGLAMSSRNVYLSAEERAIAPTLYRAMKEVAKRIKAGKTIASSLTAGAELITEAGFVLDYLEARHAETLAPIKSPKEGPIRLLVAAKLGKTRLIDNIAV.

34-41 serves as a coordination point for ATP; the sequence is MGALHDGH. The active-site Proton donor is the His41. Gln65 serves as a coordination point for (R)-pantoate. Residue Gln65 participates in beta-alanine binding. 152–155 contacts ATP; it reads GSKD. Gln158 serves as a coordination point for (R)-pantoate. ATP contacts are provided by residues Val181 and 189-192; that span reads MSSR.

It belongs to the pantothenate synthetase family. In terms of assembly, homodimer.

The protein localises to the cytoplasm. The enzyme catalyses (R)-pantoate + beta-alanine + ATP = (R)-pantothenate + AMP + diphosphate + H(+). It participates in cofactor biosynthesis; (R)-pantothenate biosynthesis; (R)-pantothenate from (R)-pantoate and beta-alanine: step 1/1. Its function is as follows. Catalyzes the condensation of pantoate with beta-alanine in an ATP-dependent reaction via a pantoyl-adenylate intermediate. In Rhodopseudomonas palustris (strain ATCC BAA-98 / CGA009), this protein is Pantothenate synthetase.